The primary structure comprises 235 residues: Vacuolar protein sorting-associated protein 60.1 (235 aa).

Positions 1-29 are disordered; the sequence is MRRVFGAKKNTEPPPSIQDASDRINKRGD. Positions 20–29 are enriched in basic and acidic residues; the sequence is ASDRINKRGD. A coiled-coil region spans residues 99–148; that stretch reads LKDAQQTMTALKSANKELKGMMKTVKIQDIDNLQDEMMDLMDVSSEIQES. The tract at residues 175–235 is disordered; it reads MGNETEADGM…PAVPRASLRG (61 aa).

This sequence belongs to the SNF7 family. Interacts with SKD1/VPS4 and LIP5. Interacts with VPS2.2.

The protein localises to the endosome. It localises to the multivesicular body membrane. In terms of biological role, probable peripherally associated component of the endosomal sorting required for transport complex III (ESCRT-III) which is involved in multivesicular bodies (MVBs) formation and sorting of endosomal cargo proteins into MVBs. The sequence is that of Vacuolar protein sorting-associated protein 60.1 from Arabidopsis thaliana (Mouse-ear cress).